A 293-amino-acid polypeptide reads, in one-letter code: Elongation factor Ts (293 aa).

The interval 80 to 83 (TDFV) is involved in Mg(2+) ion dislocation from EF-Tu.

It belongs to the EF-Ts family.

The protein resides in the cytoplasm. In terms of biological role, associates with the EF-Tu.GDP complex and induces the exchange of GDP to GTP. It remains bound to the aminoacyl-tRNA.EF-Tu.GTP complex up to the GTP hydrolysis stage on the ribosome. This is Elongation factor Ts from Lacticaseibacillus casei (strain BL23) (Lactobacillus casei).